Here is a 1664-residue protein sequence, read N- to C-terminus: DNA-directed RNA polymerase I subunit RPA190 (1664 aa).

Positions 62, 65, 72, 75, 102, 105, 233, and 236 each coordinate Zn(2+). Residues 280 to 310 are disordered; the sequence is QAKKLDGSNEASANDEESFDVGRNPTTRPKT. Residues aspartate 627, aspartate 629, and aspartate 631 each coordinate Mg(2+). A Phosphoserine modification is found at serine 889. The interval 992–1004 is bridging helix; the sequence is PQEYYFHCMAGRE. The segment at 1343–1423 is disordered; the sequence is DIGVAVPRLQ…DSDSEDEDVD (81 aa). Positions 1393 to 1414 are enriched in basic and acidic residues; that stretch reads ETMREAEKSSDEEGIDSDKESD. The residue at position 1636 (serine 1636) is a Phosphoserine.

This sequence belongs to the RNA polymerase beta' chain family. In terms of assembly, component of the RNA polymerase I (Pol I) complex consisting of 14 subunits: RPA135, RPA190, RPC40, RPA14, RPB5, RPO26, RPA43, RPB8, RPA12, RPB10, RPC19, RPC10, RPA49 and RPA34. The complex is composed of a horseshoe-shaped core containing ten subunits (RPA135, RPA190, RPB5, RPO26, RPB8, RPB10, RPC10, RPA12, RPC19 and RPC40) where RPA135 and RPA190 form the DNA-binding cleft. Outside of the core, RPA14 and RPA43 form the stalk that mediates interactions with transcription initiation factors and newly synthesized RNA.

It localises to the nucleus. The protein resides in the nucleolus. It catalyses the reaction RNA(n) + a ribonucleoside 5'-triphosphate = RNA(n+1) + diphosphate. In terms of biological role, DNA-dependent RNA polymerases catalyze the transcription of DNA into RNA using the four ribonucleoside triphosphates as substrates. Component of RNA polymerase I (Pol I) which synthesizes ribosomal RNA precursors. Besides, RNA polymerase I has intrinsic RNA cleavage activity. RPA190 and RPA135 both contribute to the polymerase catalytic activity and together form the Pol I active center. In addition, subunit RPA12 contributes a catalytic zinc ribbon that is required for RNA cleavage by Pol I. A single stranded DNA template strand of the promoter is positioned within the central active site cleft of Pol I. A bridging helix emanates from RPA190 and crosses the cleft near the catalytic site and is thought to promote translocation of Pol I by acting as a ratchet that moves the RNA-DNA hybrid through the active site by switching from straight to bent conformations at each step of nucleotide addition. This Saccharomyces cerevisiae (strain ATCC 204508 / S288c) (Baker's yeast) protein is DNA-directed RNA polymerase I subunit RPA190 (RPA190).